Consider the following 437-residue polypeptide: MTTSTLQKAIDLVTKATEEDKAKNYEEALRLYQHAVEYFLHAIKYEAHSDKAKESIRAKCMQYLDRAEKLKDYLRNKEKHGKKPVKENQSEGKGSDSDSEGDNPEKKKLQEQLMGAVVMEKPNIRWNDVAGLEGAKEALKEAVILPIKFPHLFTGKRTPWRGILLFGPPGTGKSYLAKAVATEANNSTFFSVSSSDLMSKWLGESEKLVKNLFELARQHKPSIIFIDEVDSLCGSRNENESEAARRIKTEFLVQMQGVGNNNDGTLVLGATNIPWVLDSAIRRRFEKRIYIPLPEEAARAQMFRLHLGSTPHNLTDANIHELARKTEGYSGADISIIVRDSLMQPVRKVQSATHFKKVCGPSRTNPSVMIDDLLTPCSPGDPGAIEMTWMDVPGDKLLEPVVCMSDMLRSLATTRPTVNADDLLKVKKFSEDFGQES.

Positions 2-80 constitute an MIT domain; it reads TTSTLQKAID…KDYLRNKEKH (79 aa). Lys-8 is modified (N6-acetyllysine). The stretch at 15–37 forms a coiled coil; sequence KATEEDKAKNYEEALRLYQHAVE. Residues 75–106 form a disordered region; it reads RNKEKHGKKPVKENQSEGKGSDSDSEGDNPEK. A compositionally biased stretch (basic and acidic residues) spans 84–96; sequence PVKENQSEGKGSD. Ser-95 and Ser-97 each carry phosphoserine. Position 167–174 (167–174) interacts with ATP; that stretch reads GPPGTGKS.

This sequence belongs to the AAA ATPase family. As to quaternary structure, proposed to be monomeric or homodimeric in nucleotide-free form and to oligomerize upon binding to ATP to form two stacked hexameric or heptameric rings with a central pore through which ESCRT-III substrates are translocated in an ATP-dependent manner. Interacts with CHMP1A, CHMP1B, CHMP2A, CHMP2B, CHMP3, CHMP4A, CHMP4B, CHMP4C and CHMP6. Interacts with VPS4B; the interaction suggests a heteromeric assembly with VPS4B. Interacts with SPAST. Interacts with IST1. Interacts with ZFYVE19/ANCHR; leading to retain it at midbody. In terms of tissue distribution, highly expressed in testis and moderately in heart and brain. Not detected in spleen, lung, liver, skeletal muscle or kidney.

It is found in the late endosome membrane. The protein resides in the midbody. It localises to the cytoplasm. The protein localises to the cytoskeleton. Its subcellular location is the spindle. It carries out the reaction ATP + H2O = ADP + phosphate + H(+). Functionally, involved in late steps of the endosomal multivesicular bodies (MVB) pathway. Recognizes membrane-associated ESCRT-III assemblies and catalyzes their disassembly, possibly in combination with membrane fission. Redistributes the ESCRT-III components to the cytoplasm for further rounds of MVB sorting. MVBs contain intraluminal vesicles (ILVs) that are generated by invagination and scission from the limiting membrane of the endosome and mostly are delivered to lysosomes enabling degradation of membrane proteins, such as stimulated growth factor receptors, lysosomal enzymes and lipids. It is required for proper accomplishment of various processes including the regulation of endosome size, primary cilium organization, mitotic spindle organization and chromosome segregation, and nuclear envelope sealing and spindle disassembly during anaphase. In conjunction with the ESCRT machinery also appears to function in topologically equivalent membrane fission events, such as the terminal stages of cytokinesis. Involved in cytokinesis: retained at the midbody by ZFYVE19/ANCHR and CHMP4C until abscission checkpoint signaling is terminated at late cytokinesis. It is then released following dephosphorylation of CHMP4C, leading to abscission. VPS4A/B are required for the exosomal release of SDCBP, CD63 and syndecan. Critical for normal erythroblast cytokinesis and correct erythropoiesis. In Mus musculus (Mouse), this protein is Vacuolar protein sorting-associated protein 4A.